The chain runs to 399 residues: Nicotinate phosphoribosyltransferase (399 aa).

His224 bears the Phosphohistidine; by autocatalysis mark.

The protein belongs to the NAPRTase family. Transiently phosphorylated on a His residue during the reaction cycle. Phosphorylation strongly increases the affinity for substrates and increases the rate of nicotinate D-ribonucleotide production. Dephosphorylation regenerates the low-affinity form of the enzyme, leading to product release.

The enzyme catalyses nicotinate + 5-phospho-alpha-D-ribose 1-diphosphate + ATP + H2O = nicotinate beta-D-ribonucleotide + ADP + phosphate + diphosphate. The protein operates within cofactor biosynthesis; NAD(+) biosynthesis; nicotinate D-ribonucleotide from nicotinate: step 1/1. In terms of biological role, catalyzes the synthesis of beta-nicotinate D-ribonucleotide from nicotinate and 5-phospho-D-ribose 1-phosphate at the expense of ATP. In Ectopseudomonas mendocina (strain ymp) (Pseudomonas mendocina), this protein is Nicotinate phosphoribosyltransferase.